The following is a 349-amino-acid chain: Hepatic sodium/bile acid cotransporter (349 aa).

The Extracellular portion of the chain corresponds to 1–22 (MEAHNASAPFNFTLPPNFGKRP). 2 N-linked (GlcNAc...) asparagine glycosylation sites follow: N5 and N11. Residues 23–44 (TDLALSVILVFMLFFIMLSLGC) form a helical membrane-spanning segment. Over 45–47 (TME) the chain is Cytoplasmic. A helical membrane pass occupies residues 48 to 83 (FSKIKAHLWKPKGLAIALVAQYGIMPLTAFVLGKVF). Topologically, residues 84–86 (RLK) are extracellular. Residues 87 to 112 (NIEALAILVCGCSPGGNLSNVFSLAM) form a discontinuously helical membrane-spanning segment. Residues 113–115 (KGD) are Cytoplasmic-facing. Residues 116 to 142 (MNLSIVMTTCSTFCALGMMPLLLYIYS) form a helical membrane-spanning segment. At 143–156 (RGIYDGDLKDKVPY) the chain is on the extracellular side. Residues 157 to 179 (KGIVISLVLVLIPCTIGIVLKSK) form a helical membrane-spanning segment. Residues 180 to 183 (RPQY) lie on the Cytoplasmic side of the membrane. The helical transmembrane segment at 184 to 217 (MRYVIKGGMIIILLCSVAVTVLSAINVGKSIMFA) threads the bilayer. Over 218–219 (MT) the chain is Extracellular. The chain crosses the membrane as a helical span at residues 220-243 (PLLIATSSLMPFIGFLLGYVLSAL). The Cytoplasmic portion of the chain corresponds to 244 to 247 (FCLN). A discontinuously helical transmembrane segment spans residues 248 to 273 (GRCRRTVSMETGCQNVQLCSTILNVA). The Extracellular portion of the chain corresponds to 274–280 (FPPEVIG). The helical transmembrane segment at 281–311 (PLFFFPLLYMIFQLGEGLLLIAIFWCYEKFK) threads the bilayer. Residues 312-349 (TPKDKTKMIYTAATTEETIPGALGNGTYKGEDCSPCTA) are Cytoplasmic-facing.

Belongs to the bile acid:sodium symporter (BASS) (TC 2.A.28) family. In terms of assembly, (Microbial infection) Interacts with the myristoylated pre-S1 domain of hepatitis B virus large envelope protein; myristoylation is essential for this interaction. Expressed in liver. Expressed in placental trophoblasts.

The protein resides in the cell membrane. The enzyme catalyses taurocholate(out) + 2 Na(+)(out) = taurocholate(in) + 2 Na(+)(in). It carries out the reaction cholate(out) + 2 Na(+)(out) = cholate(in) + 2 Na(+)(in). The catalysed reaction is estrone 3-sulfate(out) + 2 Na(+)(out) = estrone 3-sulfate(in) + 2 Na(+)(in). It catalyses the reaction taurochenodeoxycholate(out) + 2 Na(+)(out) = taurochenodeoxycholate(in) + 2 Na(+)(in). The enzyme catalyses tauroursodeoxycholate(out) + 2 Na(+)(out) = tauroursodeoxycholate(in) + 2 Na(+)(in). It carries out the reaction glycocholate(out) + 2 Na(+)(out) = glycocholate(in) + 2 Na(+)(in). The catalysed reaction is tauronorcholate(out) + 2 Na(+)(out) = tauronorcholate(in) + 2 Na(+)(in). It catalyses the reaction taurodeoxycholate(out) + 2 Na(+)(out) = taurodeoxycholate(in) + 2 Na(+)(in). The enzyme catalyses tauroallocholate(out) + 2 Na(+)(out) = tauroallocholate(in) + 2 Na(+)(in). It carries out the reaction taurohyodeoxycholate(out) + 2 Na(+)(out) = taurohyodeoxycholate(in) + 2 Na(+)(in). The catalysed reaction is taurohyocholate(out) + 2 Na(+)(out) = taurohyocholate(in) + 2 Na(+)(in). It catalyses the reaction tauro-beta-muricholate(out) + 2 Na(+)(out) = tauro-beta-muricholate(in) + 2 Na(+)(in). The transport of bile acids is sodium-dependent. Functionally, as a major transporter of conjugated bile salts from plasma into the hepatocyte, it plays a key role in the enterohepatic circulation of bile salts necessary for the solubilization and absorption of dietary fat and fat-soluble vitamins. It is strictly dependent on the extracellular presence of sodium. It exhibits broad substrate specificity and transports various bile acids, such as taurocholate, cholate, as well as non-bile acid organic compounds, such as estrone sulfate. Works collaboratively with the ileal transporter (NTCP2), the organic solute transporter (OST), and the bile salt export pump (BSEP), to ensure efficacious biological recycling of bile acids during enterohepatic circulation. Its function is as follows. (Microbial infection) Acts as an entry receptor for hepatitis B virus (HBV). The recognition for human SLC10A1/NTCP is highly specific. This Homo sapiens (Human) protein is Hepatic sodium/bile acid cotransporter (SLC10A1).